The following is a 179-amino-acid chain: Large ribosomal subunit protein uL10 (179 aa).

It belongs to the universal ribosomal protein uL10 family. As to quaternary structure, part of the ribosomal stalk of the 50S ribosomal subunit. The N-terminus interacts with L11 and the large rRNA to form the base of the stalk. The C-terminus forms an elongated spine to which L12 dimers bind in a sequential fashion forming a multimeric L10(L12)X complex.

In terms of biological role, forms part of the ribosomal stalk, playing a central role in the interaction of the ribosome with GTP-bound translation factors. This Thermomicrobium roseum (strain ATCC 27502 / DSM 5159 / P-2) protein is Large ribosomal subunit protein uL10.